Reading from the N-terminus, the 213-residue chain is Phosphoribosyl-dephospho-CoA transferase (213 aa).

Active-site residues include Asp135 and Asp137.

It belongs to the MdcG family.

It carries out the reaction apo-[malonate decarboxylase ACP] + 2'-(5''-triphospho-alpha-D-ribosyl)-3'-dephospho-CoA = holo-[malonate decarboxylase ACP] + diphosphate. Its function is as follows. Transfers 2'-(5-triphosphoribosyl)-3'-dephosphocoenzyme-A to the apo-[acyl-carrier-protein] of the malonate decarboxylase to yield holo-[acyl-carrier-protein]. This Xanthomonas campestris pv. campestris (strain ATCC 33913 / DSM 3586 / NCPPB 528 / LMG 568 / P 25) protein is Phosphoribosyl-dephospho-CoA transferase.